Here is a 493-residue protein sequence, read N- to C-terminus: Putative MgpC-like protein MPN_414 (493 aa).

The segment covering 1–14 has biased composition (polar residues); the sequence is MKPTSLPKNFTNNP. 2 disordered regions span residues 1–92 and 441–493; these read MKPT…GHNS and KSAR…SGNH. 2 stretches are compositionally biased toward basic and acidic residues: residues 25 to 34 and 44 to 56; these read DNGRAYRKLN and DSTK…DKDG. Composition is skewed to polar residues over residues 72 to 92 and 445 to 472; these read VSST…GHNS and ENAQ…SPCR. Positions 482–493 are enriched in basic and acidic residues; it reads RVTEEERSSGNH.

It belongs to the MgpC family.

This chain is Putative MgpC-like protein MPN_414, found in Mycoplasma pneumoniae (strain ATCC 29342 / M129 / Subtype 1) (Mycoplasmoides pneumoniae).